Reading from the N-terminus, the 591-residue chain is V-type ATP synthase alpha chain (591 aa).

233–240 (GPFGAGKT) serves as a coordination point for ATP.

This sequence belongs to the ATPase alpha/beta chains family.

The enzyme catalyses ATP + H2O + 4 H(+)(in) = ADP + phosphate + 5 H(+)(out). Functionally, produces ATP from ADP in the presence of a proton gradient across the membrane. The V-type alpha chain is a catalytic subunit. This Streptococcus pneumoniae serotype 19F (strain G54) protein is V-type ATP synthase alpha chain.